The following is a 604-amino-acid chain: Arginine--tRNA ligase (604 aa).

Positions 142-152 (PNIAKEMHVGH) match the 'HIGH' region motif.

Belongs to the class-I aminoacyl-tRNA synthetase family. As to quaternary structure, monomer.

It localises to the cytoplasm. It carries out the reaction tRNA(Arg) + L-arginine + ATP = L-arginyl-tRNA(Arg) + AMP + diphosphate. This chain is Arginine--tRNA ligase, found in Prochlorococcus marinus (strain MIT 9312).